The following is a 460-amino-acid chain: Chromosomal replication initiator protein DnaA 2 (460 aa).

The domain I, interacts with DnaA modulators stretch occupies residues 1–68 (MRAWEDFLLL…KTSLVNNNGK (68 aa)). Positions 68 to 102 (KLIRVHITSLDKTAPFYKEKQIQQEKTAYFTMQYG) are domain II. Residues 103-321 (NVNPEMTFGN…DALKLLSKRV (219 aa)) are domain III, AAA+ region. 4 residues coordinate ATP: glycine 151, glycine 153, lysine 154, and threonine 155. The domain IV, binds dsDNA stretch occupies residues 322–460 (AYKKLAQQLL…EFFPEEEISC (139 aa)).

Belongs to the DnaA family. Oligomerizes as a right-handed, spiral filament on DNA at oriC.

It is found in the cytoplasm. Its function is as follows. Plays an essential role in the initiation and regulation of chromosomal replication. ATP-DnaA binds to the origin of replication (oriC) to initiate formation of the DNA replication initiation complex once per cell cycle. Binds the DnaA box (a 9 base pair repeat at the origin) and separates the double-stranded (ds)DNA. Forms a right-handed helical filament on oriC DNA; dsDNA binds to the exterior of the filament while single-stranded (ss)DNA is stabiized in the filament's interior. The ATP-DnaA-oriC complex binds and stabilizes one strand of the AT-rich DNA unwinding element (DUE), permitting loading of DNA polymerase. After initiation quickly degrades to an ADP-DnaA complex that is not apt for DNA replication. Binds acidic phospholipids. The polypeptide is Chromosomal replication initiator protein DnaA 2 (Chlamydia caviae (strain ATCC VR-813 / DSM 19441 / 03DC25 / GPIC) (Chlamydophila caviae)).